We begin with the raw amino-acid sequence, 363 residues long: Flagellar P-ring protein 2 (363 aa).

An N-terminal signal peptide occupies residues 1 to 20 (MKLRTCCISLMLLLALPLQA).

It belongs to the FlgI family. In terms of assembly, the basal body constitutes a major portion of the flagellar organelle and consists of four rings (L,P,S, and M) mounted on a central rod.

The protein resides in the periplasm. Its subcellular location is the bacterial flagellum basal body. Functionally, assembles around the rod to form the L-ring and probably protects the motor/basal body from shearing forces during rotation. This Photobacterium profundum (strain SS9) protein is Flagellar P-ring protein 2.